A 322-amino-acid chain; its full sequence is tRNA N6-adenosine threonylcarbamoyltransferase (322 aa).

His109 and His113 together coordinate Fe cation. Residues 131-135, Asp164, Gly177, Asp181, and Asn277 each bind substrate; that span reads LISGG. Asp303 is a Fe cation binding site.

This sequence belongs to the KAE1 / TsaD family. It depends on Fe(2+) as a cofactor.

Its subcellular location is the cytoplasm. It carries out the reaction L-threonylcarbamoyladenylate + adenosine(37) in tRNA = N(6)-L-threonylcarbamoyladenosine(37) in tRNA + AMP + H(+). In terms of biological role, required for the formation of a threonylcarbamoyl group on adenosine at position 37 (t(6)A37) in tRNAs that read codons beginning with adenine. Is involved in the transfer of the threonylcarbamoyl moiety of threonylcarbamoyl-AMP (TC-AMP) to the N6 group of A37, together with TsaE and TsaB. TsaD likely plays a direct catalytic role in this reaction. The sequence is that of tRNA N6-adenosine threonylcarbamoyltransferase from Mesomycoplasma hyopneumoniae (strain 232) (Mycoplasma hyopneumoniae).